The chain runs to 533 residues: Lysine--tRNA ligase (533 aa).

Residues 28-36 (PSGHIHIGN) carry the 'HIGH' region motif. Residues 278–282 (PMSSS) carry the 'KMSKS' region motif.

This sequence belongs to the class-I aminoacyl-tRNA synthetase family.

The protein localises to the cytoplasm. It catalyses the reaction tRNA(Lys) + L-lysine + ATP = L-lysyl-tRNA(Lys) + AMP + diphosphate. This is Lysine--tRNA ligase (lysS) from Methanococcus maripaludis (strain DSM 14266 / JCM 13030 / NBRC 101832 / S2 / LL).